A 258-amino-acid polypeptide reads, in one-letter code: Venom plasminogen activator (258 aa).

A signal peptide spans 1–18 (MVLIRVLANLLILQLSYA). Residues 19 to 24 (QKSSEL) constitute a propeptide that is removed on maturation. Positions 25-249 (VVGGDECNIN…YTDWIQSIIS (225 aa)) constitute a Peptidase S1 domain. Disulfide bonds link Cys-31/Cys-163, Cys-50/Cys-66, Cys-98/Cys-256, Cys-142/Cys-210, Cys-174/Cys-189, and Cys-200/Cys-225. Asn-44 is a glycosylation site (N-linked (GlcNAc...) asparagine). Active-site charge relay system residues include His-65 and Asp-110. Ser-204 (charge relay system) is an active-site residue.

The protein belongs to the peptidase S1 family. Snake venom subfamily. As to quaternary structure, monomer. In terms of tissue distribution, expressed by the venom gland.

It localises to the secreted. Its function is as follows. Snake venom serine protease that activates plasminogen. Shows a preferential cleavage at Arg-|-Xaa instead of Lys-|-Xaa bonds. The polypeptide is Venom plasminogen activator (Agkistrodon piscivorus leucostoma (Western cottonmouth)).